A 258-amino-acid chain; its full sequence is Hemin import ATP-binding protein HmuV (258 aa).

Residues 2–242 (LTAEKLCVER…SKIEELYDFP (241 aa)) enclose the ABC transporter domain. Residue 34–41 (GANGAGKS) coordinates ATP.

Belongs to the ABC transporter superfamily. Heme (hemin) importer (TC 3.A.1.14.5) family. The complex is composed of two ATP-binding proteins (HmuV), two transmembrane proteins (HmuU) and a solute-binding protein (HmuT).

The protein resides in the cell inner membrane. In terms of biological role, part of the ABC transporter complex HmuTUV involved in hemin import. Responsible for energy coupling to the transport system. This is Hemin import ATP-binding protein HmuV from Hydrogenovibrio crunogenus (strain DSM 25203 / XCL-2) (Thiomicrospira crunogena).